The sequence spans 95 residues: Co-chaperonin GroES (95 aa).

Belongs to the GroES chaperonin family. As to quaternary structure, heptamer of 7 subunits arranged in a ring. Interacts with the chaperonin GroEL.

The protein localises to the cytoplasm. Its function is as follows. Together with the chaperonin GroEL, plays an essential role in assisting protein folding. The GroEL-GroES system forms a nano-cage that allows encapsulation of the non-native substrate proteins and provides a physical environment optimized to promote and accelerate protein folding. GroES binds to the apical surface of the GroEL ring, thereby capping the opening of the GroEL channel. The protein is Co-chaperonin GroES of Francisella tularensis subsp. holarctica (strain FTNF002-00 / FTA).